We begin with the raw amino-acid sequence, 299 residues long: Homoserine O-acetyltransferase (299 aa).

Cys142 serves as the catalytic Acyl-thioester intermediate. Residues Lys163 and Ser192 each contribute to the substrate site. The active-site Proton acceptor is His235. Residue Glu237 is part of the active site. Substrate is bound at residue Arg249.

It belongs to the MetA family.

The protein localises to the cytoplasm. The enzyme catalyses L-homoserine + acetyl-CoA = O-acetyl-L-homoserine + CoA. It participates in amino-acid biosynthesis; L-methionine biosynthesis via de novo pathway; O-acetyl-L-homoserine from L-homoserine: step 1/1. Functionally, transfers an acetyl group from acetyl-CoA to L-homoserine, forming acetyl-L-homoserine. The protein is Homoserine O-acetyltransferase of Synechococcus elongatus (strain ATCC 33912 / PCC 7942 / FACHB-805) (Anacystis nidulans R2).